The sequence spans 293 residues: ATP phosphoribosyltransferase (293 aa).

The protein belongs to the ATP phosphoribosyltransferase family. Long subfamily. It depends on Mg(2+) as a cofactor.

It is found in the cytoplasm. The catalysed reaction is 1-(5-phospho-beta-D-ribosyl)-ATP + diphosphate = 5-phospho-alpha-D-ribose 1-diphosphate + ATP. It participates in amino-acid biosynthesis; L-histidine biosynthesis; L-histidine from 5-phospho-alpha-D-ribose 1-diphosphate: step 1/9. With respect to regulation, feedback inhibited by histidine. Functionally, catalyzes the condensation of ATP and 5-phosphoribose 1-diphosphate to form N'-(5'-phosphoribosyl)-ATP (PR-ATP). Has a crucial role in the pathway because the rate of histidine biosynthesis seems to be controlled primarily by regulation of HisG enzymatic activity. This is ATP phosphoribosyltransferase from Solidesulfovibrio magneticus (strain ATCC 700980 / DSM 13731 / RS-1) (Desulfovibrio magneticus).